A 188-amino-acid chain; its full sequence is Capsid protein (188 aa).

It belongs to the tymoviruses capsid protein family.

The protein localises to the virion. Its function is as follows. Self-assembles to form a T=3 icosahedral capsid composed of 180 copies of the capsid protein. The capsid encapsulates the single-stranded RNA genome. The protein is Capsid protein of Physalis heterophylla (PhMV).